The primary structure comprises 1024 residues: SAC3 family protein 1 (1024 aa).

The interval Met-1–Ser-62 is disordered. Residues Arg-11–Ser-21 show a composition bias toward basic residues. Residues Lys-22–Ser-38 are compositionally biased toward basic and acidic residues. Positions Val-39 to Ala-52 are enriched in acidic residues. The region spanning Glu-243–Lys-433 is the PCI domain. Residue Ser-841 is modified to Phosphoserine. Residues Ala-945–Thr-1022 adopt a coiled-coil conformation.

It belongs to the SAC3 family.

The protein localises to the cytoplasm. Its subcellular location is the nucleus envelope. The sequence is that of SAC3 family protein 1 from Schizosaccharomyces pombe (strain 972 / ATCC 24843) (Fission yeast).